Here is a 179-residue protein sequence, read N- to C-terminus: Bifunctional protein PyrR (179 aa).

Residues 100–112 (VILIDDVLFTGRT) carry the PRPP-binding motif.

This sequence belongs to the purine/pyrimidine phosphoribosyltransferase family. PyrR subfamily.

The enzyme catalyses UMP + diphosphate = 5-phospho-alpha-D-ribose 1-diphosphate + uracil. Regulates the transcription of the pyrimidine nucleotide (pyr) operon in response to exogenous pyrimidines. In terms of biological role, also displays a weak uracil phosphoribosyltransferase activity which is not physiologically significant. The protein is Bifunctional protein PyrR of Mannheimia succiniciproducens (strain KCTC 0769BP / MBEL55E).